Consider the following 90-residue polypeptide: DNA-binding protein HTa (90 aa).

It belongs to the bacterial histone-like protein family. Homotetramer.

Functionally, histone-like DNA-binding protein which is capable of wrapping DNA to stabilize it, and thus to prevent its denaturation under extreme environmental conditions. In Thermoplasma acidophilum (strain ATCC 25905 / DSM 1728 / JCM 9062 / NBRC 15155 / AMRC-C165), this protein is DNA-binding protein HTa.